A 100-amino-acid chain; its full sequence is Urease subunit gamma (100 aa).

Belongs to the urease gamma subunit family. Heterotrimer of UreA (gamma), UreB (beta) and UreC (alpha) subunits. Three heterotrimers associate to form the active enzyme.

It is found in the cytoplasm. The catalysed reaction is urea + 2 H2O + H(+) = hydrogencarbonate + 2 NH4(+). It functions in the pathway nitrogen metabolism; urea degradation; CO(2) and NH(3) from urea (urease route): step 1/1. The polypeptide is Urease subunit gamma (Lysinibacillus sphaericus (strain C3-41)).